We begin with the raw amino-acid sequence, 565 residues long: Proline--tRNA ligase (565 aa).

It belongs to the class-II aminoacyl-tRNA synthetase family. ProS type 1 subfamily. Homodimer.

Its subcellular location is the cytoplasm. The catalysed reaction is tRNA(Pro) + L-proline + ATP = L-prolyl-tRNA(Pro) + AMP + diphosphate. Functionally, catalyzes the attachment of proline to tRNA(Pro) in a two-step reaction: proline is first activated by ATP to form Pro-AMP and then transferred to the acceptor end of tRNA(Pro). As ProRS can inadvertently accommodate and process non-cognate amino acids such as alanine and cysteine, to avoid such errors it has two additional distinct editing activities against alanine. One activity is designated as 'pretransfer' editing and involves the tRNA(Pro)-independent hydrolysis of activated Ala-AMP. The other activity is designated 'posttransfer' editing and involves deacylation of mischarged Ala-tRNA(Pro). The misacylated Cys-tRNA(Pro) is not edited by ProRS. The chain is Proline--tRNA ligase from Lactobacillus acidophilus (strain ATCC 700396 / NCK56 / N2 / NCFM).